The primary structure comprises 493 residues: MFKLALTLTLCLAGSLSLAQHNPHWWGNRNTIVHLFEWKWSDIAQECESFLGPRGFAGVQVSPVNENIIAAGRPWWERYQPISYKLTTRSGNEEEFGDMVRRCNDVGVRIYVDVLLNHMSGDFDGVVVGTAGTEAEPREKSFPGVPYTAQDFHPTCEITDWNDRFQVQQCELVGLKDLDQSSDWVRSKLIEFLDHLIELGVAGFRVDAAKHMASEDLEYIYSSLSNLNIDHGFPHNSRPFIFQEVIDHGHETVSRDEYKDLGAVTEFRFSEEIGNAFRGNNALKWLQSWGTGWGFLPSGQALTFVDNHDNQRDAGAVLNYKSPKQYKMATAFHLAYPYGISRVMSSFAFDDHDTPPPQDAQERIVSPEFDEDGACVNGWICEHRWRQIYAMVGFKNAVRDTEVTGWWDNGDNQISFCRGNKGFLAINNNLYDLSQDLNTCLPEGTYCDVISGSLIDGSCTGKSVTVNEYGFGYIHIGSDDFDGVLALHVDARV.

Positions 1–19 (MFKLALTLTLCLAGSLSLA) are cleaved as a signal peptide. A Pyrrolidone carboxylic acid modification is found at Gln-20. Residues Cys-47 and Cys-103 are joined by a disulfide bond. Ca(2+)-binding residues include Asn-117, Gln-168, and Asp-177. A disulfide bridge links Cys-156 with Cys-170. Arg-205 lines the chloride pocket. The Nucleophile role is filled by Asp-207. His-211 lines the Ca(2+) pocket. Glu-244 serves as the catalytic Proton donor. Chloride is bound by residues Asn-307 and Arg-342. 3 disulfides stabilise this stretch: Cys-375–Cys-381, Cys-417–Cys-440, and Cys-447–Cys-459.

It belongs to the glycosyl hydrolase 13 family. As to quaternary structure, monomer. The cofactor is Ca(2+). Chloride serves as cofactor.

Its subcellular location is the secreted. It carries out the reaction Endohydrolysis of (1-&gt;4)-alpha-D-glucosidic linkages in polysaccharides containing three or more (1-&gt;4)-alpha-linked D-glucose units.. The sequence is that of Alpha-amylase-related protein (Amyrel) from Drosophila teissieri (Fruit fly).